A 156-amino-acid chain; its full sequence is UPF0460 protein in nifX 3'region (156 aa).

This sequence belongs to the UPF0460 family.

The polypeptide is UPF0460 protein in nifX 3'region (Rhodobacter capsulatus (Rhodopseudomonas capsulata)).